Here is a 458-residue protein sequence, read N- to C-terminus: GTPase Der (458 aa).

EngA-type G domains lie at 3–167 and 176–351; these read PVVV…PETE and IKLA…AQYT. GTP-binding positions include 9–16, 56–60, 119–122, 182–189, 229–233, and 294–297; these read GRPNVGKS, DTGGF, NKID, DTAGL, and NKWD. A KH-like domain is found at 352–436; it reads FNIKTGELNN…PIRLFFREKP (85 aa).

This sequence belongs to the TRAFAC class TrmE-Era-EngA-EngB-Septin-like GTPase superfamily. EngA (Der) GTPase family. In terms of assembly, associates with the 50S ribosomal subunit.

Functionally, GTPase that plays an essential role in the late steps of ribosome biogenesis. The protein is GTPase Der of Desulfosudis oleivorans (strain DSM 6200 / JCM 39069 / Hxd3) (Desulfococcus oleovorans).